A 327-amino-acid polypeptide reads, in one-letter code: Zinc transport protein ZntB (327 aa).

At 1 to 273 (MEAIKGSDVN…ARRTYTMSLM (273 aa)) the chain is on the cytoplasmic side. The chain crosses the membrane as a helical span at residues 274-294 (AMVFLPSTFLTGLFGVNLGGI). Residues 295–300 (PGGGWR) lie on the Periplasmic side of the membrane. Residues 301 to 321 (FGFSLFCILLVVLIGGVTLWL) traverse the membrane as a helical segment. Over 322 to 327 (HRSKWL) the chain is Cytoplasmic.

This sequence belongs to the CorA metal ion transporter (MIT) (TC 1.A.35) family.

The protein resides in the cell inner membrane. It catalyses the reaction Zn(2+)(out) + H(+)(out) = Zn(2+)(in) + H(+)(in). Functionally, zinc transporter. Acts as a Zn(2+):proton symporter, which likely mediates zinc ion uptake. This is Zinc transport protein ZntB from Salmonella enteritidis PT4 (strain P125109).